We begin with the raw amino-acid sequence, 98 residues long: Cystatin-B (98 aa).

M1 bears the N-acetylmethionine mark. The Secondary area of contact signature appears at 46-50; sequence QVVAG.

It belongs to the cystatin family. In terms of assembly, able to form dimers stabilized by noncovalent forces.

Its subcellular location is the cytoplasm. It localises to the nucleus. In terms of biological role, this is an intracellular thiol proteinase inhibitor. Tightly binding reversible inhibitor of cathepsins L, H and B. The protein is Cystatin-B (CSTB) of Pan troglodytes (Chimpanzee).